A 388-amino-acid chain; its full sequence is Beta-1,4-galactosyltransferase 5 (388 aa).

Residues 1–14 lie on the Cytoplasmic side of the membrane; it reads MRVRRGLLRLPRRS. A helical; Signal-anchor for type II membrane protein membrane pass occupies residues 15–35; it reads LLAALFFFSLSSSLLYFVYVA. Residues 36–388 are Lumenal-facing; sequence PGIVNTYLFM…TPELAQVTEY (353 aa). Residues N77, N81, N90, N111, and N128 are each glycosylated (N-linked (GlcNAc...) asparagine). A disulfide bridge links C114 with C158. Residues 169-173, 208-210, 235-236, Y264, and W296 contribute to the UDP-alpha-D-galactose site; these read PFRNR, FNR, and VD. Cysteines 229 and 248 form a disulfide. D236 contacts Mn(2+). 298 to 301 serves as a coordination point for N-acetyl-D-glucosamine; it reads GEDD. 329–330 is a binding site for UDP-alpha-D-galactose; the sequence is YH. R340 contacts N-acetyl-D-glucosamine. N364 and N373 each carry an N-linked (GlcNAc...) asparagine glycan.

It belongs to the glycosyltransferase 7 family. In terms of assembly, (Microbial infection) Interacts with porcine reproductive and respiratory syndrome virus GP5. Requires Mn(2+) as cofactor.

Its subcellular location is the golgi apparatus. The protein resides in the golgi stack membrane. It catalyses the reaction a beta-D-glucosyl-(1&lt;-&gt;1')-N-acylsphing-4-enine + UDP-alpha-D-galactose = a beta-D-Gal-(1-&gt;4)-beta-D-Glc-(1&lt;-&gt;1)-Cer(d18:1(4E)) + UDP + H(+). It participates in protein modification; protein glycosylation. The protein operates within sphingolipid metabolism. In terms of biological role, catalyzes the synthesis of lactosylceramide (LacCer) via the transfer of galactose from UDP-galactose to glucosylceramide (GlcCer). LacCer is the starting point in the biosynthesis of all gangliosides (membrane-bound glycosphingolipids) which play pivotal roles in the CNS including neuronal maturation and axonal and myelin formation. Plays a role in the glycosylation of BMPR1A and regulation of its protein stability. Essential for extraembryonic development during early embryogenesis. Its function is as follows. (Microbial infection) May play a role in the glycosylation of porcine reproductive and respiratory syndrome virus GP5 protein and may be involved in the regulation of viral proliferation. The sequence is that of Beta-1,4-galactosyltransferase 5 (B4GALT5) from Sus scrofa (Pig).